A 232-amino-acid chain; its full sequence is Large ribosomal subunit protein uL1 (232 aa).

This sequence belongs to the universal ribosomal protein uL1 family. Part of the 50S ribosomal subunit.

Its function is as follows. Binds directly to 23S rRNA. The L1 stalk is quite mobile in the ribosome, and is involved in E site tRNA release. Protein L1 is also a translational repressor protein, it controls the translation of the L11 operon by binding to its mRNA. This is Large ribosomal subunit protein uL1 from Chlamydia trachomatis serovar L2b (strain UCH-1/proctitis).